A 218-amino-acid polypeptide reads, in one-letter code: ATP phosphoribosyltransferase (218 aa).

It belongs to the ATP phosphoribosyltransferase family. Short subfamily. In terms of assembly, heteromultimer composed of HisG and HisZ subunits.

The protein localises to the cytoplasm. The enzyme catalyses 1-(5-phospho-beta-D-ribosyl)-ATP + diphosphate = 5-phospho-alpha-D-ribose 1-diphosphate + ATP. The protein operates within amino-acid biosynthesis; L-histidine biosynthesis; L-histidine from 5-phospho-alpha-D-ribose 1-diphosphate: step 1/9. Its function is as follows. Catalyzes the condensation of ATP and 5-phosphoribose 1-diphosphate to form N'-(5'-phosphoribosyl)-ATP (PR-ATP). Has a crucial role in the pathway because the rate of histidine biosynthesis seems to be controlled primarily by regulation of HisG enzymatic activity. In Acaryochloris marina (strain MBIC 11017), this protein is ATP phosphoribosyltransferase.